The following is a 344-amino-acid chain: Fructose-bisphosphate aldolase (344 aa).

D-glyceraldehyde 3-phosphate is bound at residue S53. The active-site Proton donor is the D95. Zn(2+) contacts are provided by H96, D131, E161, and H212. Dihydroxyacetone phosphate is bound at residue G213. H252 is a Zn(2+) binding site. Dihydroxyacetone phosphate is bound by residues 253 to 255 (GGS) and 274 to 277 (NVDT).

The protein belongs to the class II fructose-bisphosphate aldolase family. The cofactor is Zn(2+).

The catalysed reaction is beta-D-fructose 1,6-bisphosphate = D-glyceraldehyde 3-phosphate + dihydroxyacetone phosphate. The protein operates within carbohydrate degradation; glycolysis; D-glyceraldehyde 3-phosphate and glycerone phosphate from D-glucose: step 4/4. Catalyzes the aldol condensation of dihydroxyacetone phosphate (DHAP or glycerone-phosphate) with glyceraldehyde 3-phosphate (G3P) to form fructose 1,6-bisphosphate (FBP) in gluconeogenesis and the reverse reaction in glycolysis. The sequence is that of Fructose-bisphosphate aldolase (fba) from Corynebacterium glutamicum (strain ATCC 13032 / DSM 20300 / JCM 1318 / BCRC 11384 / CCUG 27702 / LMG 3730 / NBRC 12168 / NCIMB 10025 / NRRL B-2784 / 534).